Here is a 196-residue protein sequence, read N- to C-terminus: Probable peptidyl-prolyl cis-trans isomerase (196 aa).

Residues 1-26 (MSFIRSALAAAAFVALSIGAVQTASA) form the signal peptide. The 166-residue stretch at 29-194 (PENTVILKLK…KIIKATIEAD (166 aa)) folds into the PPIase cyclophilin-type domain.

It belongs to the cyclophilin-type PPIase family.

The protein resides in the periplasm. The enzyme catalyses [protein]-peptidylproline (omega=180) = [protein]-peptidylproline (omega=0). PPIases accelerate the folding of proteins. It catalyzes the cis-trans isomerization of proline imidic peptide bonds in oligopeptides. This Brucella abortus (strain 2308) protein is Probable peptidyl-prolyl cis-trans isomerase (ppi).